The chain runs to 386 residues: Lycopene beta-cyclase (386 aa).

Residue 4–34 (DVLLAGAGLANGLIALALRAARPDLRVLLLD) participates in NAD(+) binding.

Belongs to the lycopene cyclase family. The cofactor is FAD.

It catalyses the reaction a carotenoid psi-end group = a carotenoid beta-end derivative. The catalysed reaction is all-trans-lycopene = gamma-carotene. It carries out the reaction gamma-carotene = all-trans-beta-carotene. The protein operates within carotenoid biosynthesis; astaxanthin biosynthesis. Its function is as follows. Catalyzes the double cyclization reaction which converts lycopene to beta-carotene. The protein is Lycopene beta-cyclase of Paracoccus sp. (strain N81106 / MBIC 01143) (Agrobacterium aurantiacum).